The chain runs to 180 residues: ATP-dependent protease subunit HslV (180 aa).

T7 is an active-site residue. Residues G165, C168, and T171 each contribute to the Na(+) site.

It belongs to the peptidase T1B family. HslV subfamily. As to quaternary structure, a double ring-shaped homohexamer of HslV is capped on each side by a ring-shaped HslU homohexamer. The assembly of the HslU/HslV complex is dependent on binding of ATP.

The protein resides in the cytoplasm. It carries out the reaction ATP-dependent cleavage of peptide bonds with broad specificity.. Allosterically activated by HslU binding. Functionally, protease subunit of a proteasome-like degradation complex believed to be a general protein degrading machinery. The sequence is that of ATP-dependent protease subunit HslV from Bacillus cereus (strain G9842).